Consider the following 369-residue polypeptide: Probable peptidoglycan glycosyltransferase FtsW (369 aa).

Helical transmembrane passes span 11 to 31, 48 to 68, 77 to 97, 134 to 151, 154 to 174, 177 to 197, 265 to 285, and 306 to 326; these read LLSVTIILLIFSIIMVGSSSV, NFIHSIISILCMIFVFNVPIY, LILCSIILLLTLNYFGISNHG, TSTIQLISIILIVSKLLL, PDFGTLVILYSSLLFMLFLIG, FLFLSASSAIFTTIVLSLIYF, LGYLGIAMIVISLFFIFFQGM, and ISLLIIIQSIINIGSSIGILP.

It belongs to the SEDS family. FtsW subfamily.

It is found in the cell inner membrane. It carries out the reaction [GlcNAc-(1-&gt;4)-Mur2Ac(oyl-L-Ala-gamma-D-Glu-L-Lys-D-Ala-D-Ala)](n)-di-trans,octa-cis-undecaprenyl diphosphate + beta-D-GlcNAc-(1-&gt;4)-Mur2Ac(oyl-L-Ala-gamma-D-Glu-L-Lys-D-Ala-D-Ala)-di-trans,octa-cis-undecaprenyl diphosphate = [GlcNAc-(1-&gt;4)-Mur2Ac(oyl-L-Ala-gamma-D-Glu-L-Lys-D-Ala-D-Ala)](n+1)-di-trans,octa-cis-undecaprenyl diphosphate + di-trans,octa-cis-undecaprenyl diphosphate + H(+). The protein operates within cell wall biogenesis; peptidoglycan biosynthesis. Functionally, peptidoglycan polymerase that is essential for cell division. This Riesia pediculicola (strain USDA) protein is Probable peptidoglycan glycosyltransferase FtsW.